The following is a 257-amino-acid chain: Acetylglutamate kinase (257 aa).

Substrate is bound by residues 43–44 (GG), arginine 65, and asparagine 157. Residues 180-185 (DVSGIL) and 208-210 (IIT) each bind ATP.

The protein belongs to the acetylglutamate kinase family. ArgB subfamily. In terms of assembly, homodimer.

The protein resides in the cytoplasm. The enzyme catalyses N-acetyl-L-glutamate + ATP = N-acetyl-L-glutamyl 5-phosphate + ADP. Its pathway is amino-acid biosynthesis; L-arginine biosynthesis; N(2)-acetyl-L-ornithine from L-glutamate: step 2/4. In terms of biological role, catalyzes the ATP-dependent phosphorylation of N-acetyl-L-glutamate. The protein is Acetylglutamate kinase of Photorhabdus laumondii subsp. laumondii (strain DSM 15139 / CIP 105565 / TT01) (Photorhabdus luminescens subsp. laumondii).